The primary structure comprises 111 residues: Guanylate cyclase activator 2B (111 aa).

Positions Met1–Ser26 are cleaved as a signal peptide. Positions Val27–Asp96 are excised as a propeptide. 3 cysteine pairs are disulfide-bonded: Cys67-Cys80, Cys100-Cys108, and Cys103-Cys111.

It belongs to the guanylin family.

It is found in the secreted. Endogenous activator of intestinal guanylate cyclase. It stimulates this enzyme through the same receptor binding region as the heat-stable enterotoxins. May be a potent physiological regulator of intestinal fluid and electrolyte transport. May be an autocrine/paracrine regulator of intestinal salt and water transport. This is Guanylate cyclase activator 2B (GUCA2B) from Cavia porcellus (Guinea pig).